The primary structure comprises 182 residues: MKIIISGPPGSGKSSVAKILSSKLSIKYVSAGLIFRDLAKRMNIDIVKLNKLAEDDFEIDKKIDLEMFKLIKSQDNVIIESHIGGWLFHNLSDLSIYLRAPLDVRAKRIASRDHISEDEAIIQIIKRERSHRERFLRYYGIDILDLSVFDLVINTSYLLPEDVADIILGVISRKNLHSALSH.

Residue 7–15 participates in ATP binding; that stretch reads GPPGSGKSS.

This sequence belongs to the cytidylate kinase family. Type 2 subfamily.

It is found in the cytoplasm. The enzyme catalyses CMP + ATP = CDP + ADP. It catalyses the reaction dCMP + ATP = dCDP + ADP. This is Cytidylate kinase (cmk) from Sulfolobus acidocaldarius (strain ATCC 33909 / DSM 639 / JCM 8929 / NBRC 15157 / NCIMB 11770).